Consider the following 37-residue polypeptide: Large ribosomal subunit protein bL36 (37 aa).

This sequence belongs to the bacterial ribosomal protein bL36 family.

The protein is Large ribosomal subunit protein bL36 of Dehalococcoides mccartyi (strain ATCC BAA-2266 / KCTC 15142 / 195) (Dehalococcoides ethenogenes (strain 195)).